Reading from the N-terminus, the 430-residue chain is Adenylosuccinate synthetase (430 aa).

GTP is bound by residues 12-18 (GDEGKGK) and 40-42 (GHT). The Proton acceptor role is filled by D13. Positions 13 and 40 each coordinate Mg(2+). IMP-binding positions include 13-16 (DEGK), 38-41 (NAGH), T128, R142, Q223, T238, and R302. H41 acts as the Proton donor in catalysis. 298–304 (VNTGRKR) is a binding site for substrate. GTP-binding positions include R304, 330–332 (KLD), and 412–414 (GVG).

It belongs to the adenylosuccinate synthetase family. In terms of assembly, homodimer. Mg(2+) serves as cofactor.

The protein resides in the cytoplasm. The enzyme catalyses IMP + L-aspartate + GTP = N(6)-(1,2-dicarboxyethyl)-AMP + GDP + phosphate + 2 H(+). It functions in the pathway purine metabolism; AMP biosynthesis via de novo pathway; AMP from IMP: step 1/2. Functionally, plays an important role in the de novo pathway of purine nucleotide biosynthesis. Catalyzes the first committed step in the biosynthesis of AMP from IMP. The sequence is that of Adenylosuccinate synthetase from Corynebacterium glutamicum (strain ATCC 13032 / DSM 20300 / JCM 1318 / BCRC 11384 / CCUG 27702 / LMG 3730 / NBRC 12168 / NCIMB 10025 / NRRL B-2784 / 534).